A 50-amino-acid polypeptide reads, in one-letter code: uncharacterized protein (50 aa).

Positions 1–50 are disordered; that stretch reads MKTGFWQQVLPKRAGRRKEHPVQYMPHKKEENATGLMNPSLHTSHSAILK. Positions 35–50 are enriched in polar residues; that stretch reads GLMNPSLHTSHSAILK.

This is an uncharacterized protein from Treponema pallidum (strain Nichols).